Reading from the N-terminus, the 726-residue chain is Prolyl endopeptidase-like (726 aa).

Residue Ser-138 is modified to Phosphoserine. Residues Ser-558, Asp-644, and His-689 each act as charge relay system in the active site.

This sequence belongs to the peptidase S9A family. As to quaternary structure, homodimer. Interacts with the AP-1 complex.

Its subcellular location is the cytoplasm. The protein resides in the cytosol. It localises to the golgi apparatus. It is found in the trans-Golgi network. The protein localises to the cytoskeleton. Its subcellular location is the nucleus. Functionally, serine peptidase whose precise substrate specificity remains unclear. Does not cleave peptides after a arginine or lysine residue. Regulates trans-Golgi network morphology and sorting by regulating the membrane binding of the AP-1 complex. May play a role in the regulation of synaptic vesicle exocytosis. This is Prolyl endopeptidase-like (Prepl) from Rattus norvegicus (Rat).